An 856-amino-acid polypeptide reads, in one-letter code: Serine/threonine-protein kinase unc-51 (856 aa).

In terms of domain architecture, Protein kinase spans 9-275 (YSKRDLLGHG…FEDFFNHPFL (267 aa)). Residues 15–23 (LGHGAFAIV) and Lys39 each bind ATP. The Proton acceptor role is filled by Asp134. Residues 304–327 (PQSSLPVPKRAGSTKLDSPTPVRR) are disordered. An LIR motif is present at residues 358-361 (FTFL). Disordered regions lie at residues 362-391 (PPRQESSPVKQVQVHTNVSPSLTTCKPVPV), 405-471 (LAAA…ERMT), and 520-582 (PTTT…PTEP). The segment covering 365–385 (QESSPVKQVQVHTNVSPSLTT) has biased composition (polar residues). Positions 411 to 436 (TAVPSSSSPTGSAVSAQHQHQHQQQQ) are enriched in low complexity. Composition is skewed to polar residues over residues 527–536 (IPKSATTANI) and 566–578 (KYQQTDVNNSPTA). The tract at residues 750–856 (YHQCLVRSQE…RQGFVAAVNT (107 aa)) is required for interaction with unc-14 and vab-8.

Belongs to the protein kinase superfamily. Ser/Thr protein kinase family. APG1/unc-51/ULK1 subfamily. As to quaternary structure, interacts with unc-14 and vab-8. Interacts (via C-terminus) with atg-13. Interacts (via the LIR motif) with lgg-1; the interaction is direct. Mg(2+) is required as a cofactor.

The enzyme catalyses L-seryl-[protein] + ATP = O-phospho-L-seryl-[protein] + ADP + H(+). It carries out the reaction L-threonyl-[protein] + ATP = O-phospho-L-threonyl-[protein] + ADP + H(+). Its function is as follows. Protein kinase important for axonal elongation and axonal guidance. Functions in the CAN axons to direct both anterior and posterior migrations. Phosphorylates both unc-14 and vab-8. Component of the unc-51/atg-13 complex that is probably recruited by lgg-1 to preautophagosomes and is required for autophagosome formation. Interaction with autophagy related proteins such as atg-13 links it to the autophagy machinery to in turn promote P-granule degradation in somatic cells. Plays a role in mitophagy during limited food availability. Regulates cell size. Plays a role in male tail ray pattern formation. May be required for normal dauer morphogenesis. The polypeptide is Serine/threonine-protein kinase unc-51 (Caenorhabditis elegans).